The chain runs to 221 residues: Ras-related protein Rab-27A (221 aa).

Ser-2 carries the post-translational modification N-acetylserine. Ser-2 is modified (phosphoserine). 16-24 (GDSGVGKTS) contributes to the GTP binding site. The Effector region signature appears at 38–46 (FITTVGIDF). Residues 74 to 78 (DTAGQ), 133 to 136 (NKSD), and 163 to 165 (SAA) contribute to the GTP site. A disulfide bond links Cys-123 and Cys-188. Residues Cys-219 and Cys-221 are each lipidated (S-geranylgeranyl cysteine). Cys-221 bears the Cysteine methyl ester mark.

The protein belongs to the small GTPase superfamily. Rab family. Binds SYTL1, SLAC2B, MYRIP, SYTL3, SYTL4 and SYTL5. Interacts with RPH3A and RPH3A. Binds MLPH and SYTL2. Interacts with UNC13D. Does not interact with the BLOC-3 complex (heterodimer of HPS1 and HPS4). Interacts (GDP-bound form preferentially) with DENND10.

Its subcellular location is the membrane. It is found in the melanosome. It localises to the late endosome. The protein localises to the lysosome. The enzyme catalyses GTP + H2O = GDP + phosphate + H(+). Regulated by guanine nucleotide exchange factors (GEFs) which promote the exchange of bound GDP for free GTP, GTPase activating proteins (GAPs) which increase the GTP hydrolysis activity, and GDP dissociation inhibitors which inhibit the dissociation of the nucleotide from the GTPase. Activated by GEFs such as DENND10. Functionally, small GTPase which cycles between active GTP-bound and inactive GDP-bound states. In its active state, binds to a variety of effector proteins to regulate homeostasis of late endocytic pathway, including endosomal positioning, maturation and secretion. Plays a role in cytotoxic granule exocytosis in lymphocytes. Required for both granule maturation and granule docking and priming at the immunologic synapse. The sequence is that of Ras-related protein Rab-27A (RAB27A) from Canis lupus familiaris (Dog).